We begin with the raw amino-acid sequence, 185 residues long: MLNEIFNKQKTQSEKSLEALKKDFTTLRTGKVNTHILDHITVDYYGTQTPLNQVATVLASDASTISITPWEKPLLKTIESAIAAANIGVNPNNDGESVKLFFPPMTREQREENVKQAKAMGEKAKVSIRNIRKDANDAVKKLEKDKAISEDEAKKAYDEVQKLTDTYTTKIDESVKNKESELLKV.

This sequence belongs to the RRF family.

It localises to the cytoplasm. Functionally, responsible for the release of ribosomes from messenger RNA at the termination of protein biosynthesis. May increase the efficiency of translation by recycling ribosomes from one round of translation to another. The polypeptide is Ribosome-recycling factor (Campylobacter jejuni (strain RM1221)).